We begin with the raw amino-acid sequence, 333 residues long: Tetraacyldisaccharide 4'-kinase (333 aa).

Isoleucine 57 to threonine 64 contributes to the ATP binding site.

Belongs to the LpxK family.

It carries out the reaction a lipid A disaccharide + ATP = a lipid IVA + ADP + H(+). It functions in the pathway glycolipid biosynthesis; lipid IV(A) biosynthesis; lipid IV(A) from (3R)-3-hydroxytetradecanoyl-[acyl-carrier-protein] and UDP-N-acetyl-alpha-D-glucosamine: step 6/6. In terms of biological role, transfers the gamma-phosphate of ATP to the 4'-position of a tetraacyldisaccharide 1-phosphate intermediate (termed DS-1-P) to form tetraacyldisaccharide 1,4'-bis-phosphate (lipid IVA). This chain is Tetraacyldisaccharide 4'-kinase, found in Dechloromonas aromatica (strain RCB).